Reading from the N-terminus, the 141-residue chain is Hemoglobin subunit mu (141 aa).

The region spanning 1 to 141 (MLSAQERAQI…VAVVLTEKYR (141 aa)) is the Globin domain. H58 and H87 together coordinate heme b.

It belongs to the globin family. In terms of tissue distribution, expressed in erythroid tissues.

The polypeptide is Hemoglobin subunit mu (HBM) (Homo sapiens (Human)).